The primary structure comprises 303 residues: Lipase chaperone (303 aa).

The chain crosses the membrane as a helical span at residues 7 to 23 (TLAAACAAWLAWWAWPD).

Belongs to the lipase chaperone family.

It localises to the cell inner membrane. Its function is as follows. May be involved in the folding of the extracellular lipase during its passage through the periplasm. The sequence is that of Lipase chaperone (lifO) from Chromobacterium violaceum (strain ATCC 12472 / DSM 30191 / JCM 1249 / CCUG 213 / NBRC 12614 / NCIMB 9131 / NCTC 9757 / MK).